The chain runs to 274 residues: Protein RecA (274 aa).

ATP is bound at residue 43-50 (GPESSGKT).

This sequence belongs to the RecA family.

It localises to the cytoplasm. In terms of biological role, can catalyze the hydrolysis of ATP in the presence of single-stranded DNA, the ATP-dependent uptake of single-stranded DNA by duplex DNA, and the ATP-dependent hybridization of homologous single-stranded DNAs. It interacts with LexA causing its activation and leading to its autocatalytic cleavage. The protein is Protein RecA of Neisseria flavescens.